Reading from the N-terminus, the 113-residue chain is UPF0145 protein SynWH7803_1684 (113 aa).

It belongs to the UPF0145 family.

This chain is UPF0145 protein SynWH7803_1684, found in Synechococcus sp. (strain WH7803).